Reading from the N-terminus, the 361-residue chain is MKNLFLFCRAGYEKECAAEIQQRAAELNVGGFVKANNNDAYVVYQCFEEDGGDILVKQLPLDSLIFARQMFAASELLADLPESDRVSPIVAALSDVSKAGELRVETPDTNEAKELSAFCRKFTVPLRQHLKKSGSLLAQENPKRPIIHVCFIGPGRAYVGYSFSNNSSPYFMGIPRLKMAADAPSRSSLKLDEAFAQFVPKEEQEERVRSGMNAVDLGACPGGWTYQLVRRGMMVSAVDNGPMNEKLMETGQVKHFREDGFRFEPQRKNIYWLVCDMVEKPARVAELIEAWAINGWFKEAIFNLKLPMKSRYKEVMAILNTMQEILKENGINEFQLQCKHLYHDRDEVTVHLWIRPSQAWN.

Residues serine 187, 220 to 223 (CPGG), aspartate 239, aspartate 259, and aspartate 276 each bind S-adenosyl-L-methionine. The active-site Proton acceptor is lysine 305.

It belongs to the class I-like SAM-binding methyltransferase superfamily. RNA methyltransferase RlmE family. RlmM subfamily. Monomer.

The protein resides in the cytoplasm. It carries out the reaction cytidine(2498) in 23S rRNA + S-adenosyl-L-methionine = 2'-O-methylcytidine(2498) in 23S rRNA + S-adenosyl-L-homocysteine + H(+). Its function is as follows. Catalyzes the 2'-O-methylation at nucleotide C2498 in 23S rRNA. The protein is Ribosomal RNA large subunit methyltransferase M of Shewanella sp. (strain MR-7).